A 168-amino-acid polypeptide reads, in one-letter code: Plastocyanin, chloroplastic (168 aa).

Residues 1 to 69 (MATVTSTTVA…SAVLASNALA (69 aa)) constitute a chloroplast transit peptide. The Plastocyanin-like domain occupies 70-168 (VEVLLGASDG…AGMVGQVTVN (99 aa)). Cu cation is bound by residues His106, Cys153, His156, and Met161.

It belongs to the plastocyanin family. Requires Cu(2+) as cofactor.

It is found in the plastid. Its subcellular location is the chloroplast thylakoid membrane. Functionally, participates in electron transfer between P700 and the cytochrome b6-f complex in photosystem I. This Pisum sativum (Garden pea) protein is Plastocyanin, chloroplastic (PETE).